The following is a 418-amino-acid chain: Bile acid-CoA:amino acid N-acyltransferase (418 aa).

At S125 the chain carries Phosphoserine. Residues C235, D328, and H362 each act as charge relay system in the active site. S416 carries the phosphoserine modification.

The protein belongs to the C/M/P thioester hydrolase family. As to quaternary structure, monomer. Expressed in the gallbladder mucosa and pancreas. Expressed in hepatocytes (at protein level).

The protein resides in the cytoplasm. Its subcellular location is the cytosol. The protein localises to the peroxisome. The catalysed reaction is choloyl-CoA + glycine = glycocholate + CoA + H(+). It carries out the reaction hexadecanoyl-CoA + H2O = hexadecanoate + CoA + H(+). It catalyses the reaction choloyl-CoA + H2O = cholate + CoA + H(+). The enzyme catalyses chenodeoxycholoyl-CoA + H2O = chenodeoxycholate + CoA + H(+). The catalysed reaction is eicosanoyl-CoA + H2O = eicosanoate + CoA + H(+). It carries out the reaction octadecanoyl-CoA + H2O = octadecanoate + CoA + H(+). It catalyses the reaction docosanoyl-CoA + H2O = docosanoate + CoA + H(+). The enzyme catalyses tetracosanoyl-CoA + H2O = tetracosanoate + CoA + H(+). The catalysed reaction is hexacosanoyl-CoA + H2O = hexacosanoate + CoA + H(+). It carries out the reaction dodecanoyl-CoA + H2O = dodecanoate + CoA + H(+). It catalyses the reaction tetradecanoyl-CoA + H2O = tetradecanoate + CoA + H(+). The enzyme catalyses choloyl-CoA + taurine = taurocholate + CoA + H(+). The catalysed reaction is chenodeoxycholoyl-CoA + glycine = glycochenodeoxycholate + CoA + H(+). It carries out the reaction chenodeoxycholoyl-CoA + taurine = taurochenodeoxycholate + CoA + H(+). It catalyses the reaction eicosanoyl-CoA + glycine = N-eicosanoylglycinate + CoA + H(+). The enzyme catalyses hexacosanoyl-CoA + glycine = N-hexacosanoylglycine + CoA + H(+). The catalysed reaction is docosanoyl-CoA + glycine = N-docosanoylglycine + CoA + H(+). Functionally, catalyzes the amidation of bile acids (BAs) with the amino acids taurine and glycine. More than 95% of the BAs are N-acyl amidates with glycine and taurine. Amidation of BAs in the liver with glycine or taurine prior to their excretion into bile is an important biochemical event in bile acid metabolism. This conjugation (or amidation) plays several important biological roles in that it promotes the secretion of BAs and cholesterol into bile and increases the detergent properties of BAs in the intestine, which facilitates lipid and vitamin absorption. May also act as an acyl-CoA thioesterase that regulates intracellular levels of free fatty acids. In vitro, catalyzes the hydrolysis of long- and very long-chain saturated acyl-CoAs to the free fatty acid and coenzyme A (CoASH), and conjugates glycine to these acyl-CoAs. This is Bile acid-CoA:amino acid N-acyltransferase (BAAT) from Homo sapiens (Human).